A 670-amino-acid chain; its full sequence is Solute carrier organic anion transporter family member 1A1 (670 aa).

The Cytoplasmic portion of the chain corresponds to 1-20 (MEETEKKVATQEGRFFSKMK). The chain crosses the membrane as a helical span at residues 21-40 (VFLMSLTCAYLAKSLSGVYM). The Extracellular portion of the chain corresponds to 41–59 (NSMLTQIERQFGIPTSVVG). A helical membrane pass occupies residues 60–80 (FITGSFEIGNLLLIVFVSYFG). Over 81–86 (RKLHRP) the chain is Cytoplasmic. Residues 87–111 (IIIGVGCVVMGLGCFLMASPHFLMG) form a helical membrane-spanning segment. Over 112-155 (RYKYETTISPTSNLSSNSFLCIENRTQTLKPTQDPTECVKEIKS) the chain is Extracellular. N-linked (GlcNAc...) asparagine glycans are attached at residues asparagine 124 and asparagine 135. A helical membrane pass occupies residues 156-184 (LMWIYVLIGNTMRGIGETPIMPLGISYIE). Residues 185 to 203 (DFAKSENSPLYIGILEMGK) are Cytoplasmic-facing. The chain crosses the membrane as a helical span at residues 204–224 (IVGPIIGLLLGSFFARVYVDI). Over 225-242 (GSVNTDDLTITPTDTRWV) the chain is Extracellular. Residues 243–267 (GAWWIGFLVCAGVNILTSIPFFFFP) form a helical membrane-spanning segment. The Cytoplasmic portion of the chain corresponds to 268-311 (KTLPKKELQDNVDVTKYEKVEKHRERAKKENLGITKDFLPFMKS). Residues 312–333 (LCCNPIYMLFSLTSVLQINGFA) form a helical membrane-spanning segment. At 334-353 (STFTFLPKYLEQQYGKSTSE) the chain is on the extracellular side. The chain crosses the membrane as a helical span at residues 354-377 (AVFLIGVYSLPPVCLGYLISGFIM). Over 378–381 (KKFK) the chain is Cytoplasmic. A helical transmembrane segment spans residues 382-405 (ITVKKAAYIAFGLSLSEYFIFLCN). Residues 406 to 513 (YLLTCDNFPV…PECDNKLQYF (108 aa)) are Extracellular-facing. The Kazal-like domain maps to 433–488 (KNVLADCNTRCSCLTDTWDPVCGDNGLAYMSACLAGCEKSVGTGTNMVFQNCSCIG). Intrachain disulfides connect cysteine 439/cysteine 469, cysteine 445/cysteine 465, and cysteine 454/cysteine 486. Residues asparagine 483 and asparagine 492 are each glycosylated (N-linked (GlcNAc...) asparagine). The chain crosses the membrane as a helical span at residues 514-536 (LIKSVFSSFIFSLAAIPGYMVLL). The Cytoplasmic portion of the chain corresponds to 537–545 (RCVKSEEKS). Residues 546–571 (IGVGLHAFFIRLLAGIPAPVYFGALI) traverse the membrane as a helical segment. Over 572-605 (DRTCLHWGTLKCGQPGACRMYDINRFRHIYLGLP) the chain is Extracellular. A helical transmembrane segment spans residues 606-623 (AAVRGSSFLPAVFILILM). The Cytoplasmic portion of the chain corresponds to 624–670 (RKFHFPGDIHSPDTELAEMKLTEKESECTDVCRSPKVENDGELKTKL). Serine 634 carries the post-translational modification Phosphoserine.

The protein belongs to the organo anion transporter (TC 2.A.60) family. In terms of assembly, binds to PDZK1. Interaction with PDZK1 is required for expression on hepatocyte surface. Highly expressed in liver, and at lower levels in kidney. Not detected in other tissues.

Its subcellular location is the basolateral cell membrane. The catalysed reaction is estrone 3-sulfate(out) + hydrogencarbonate(in) = estrone 3-sulfate(in) + hydrogencarbonate(out). The enzyme catalyses taurocholate(out) + hydrogencarbonate(in) = taurocholate(in) + hydrogencarbonate(out). It catalyses the reaction L-thyroxine(out) = L-thyroxine(in). It carries out the reaction prostaglandin E2(out) = prostaglandin E2(in). The catalysed reaction is 17beta-estradiol 17-O-(beta-D-glucuronate)(out) = 17beta-estradiol 17-O-(beta-D-glucuronate)(in). The enzyme catalyses dehydroepiandrosterone 3-sulfate(out) = dehydroepiandrosterone 3-sulfate(in). Its function is as follows. Mediates the Na(+)-independent transport of organic anions such as steroid sulfate conjugates (dehydroepiandrosterone sulfate (DHEAS), 17-beta-glucuronosyl estradiol, estrone-3-sulfate), conjugated (taurocholate) and unconjugated (cholate) bile acids, prostaglandin E2 (PGE2) and L-thyroxine T4. Also capable of transporting sulfobromophthalein (BSP), ouabain and gadoxetate. Hydrogencarbonate/HCO3(-) acts as the probable counteranion that exchanges for organic anions. Shows a pH-sensitive substrate specificity which may be ascribed to the protonation state of the binding site and leads to a stimulation of substrate transport in an acidic microenvironment. This chain is Solute carrier organic anion transporter family member 1A1, found in Mus musculus (Mouse).